Consider the following 236-residue polypeptide: Ascorbate-specific transmembrane electron transporter 2 (236 aa).

Topologically, residues 1–13 (MGLGLGVRAAPFT) are cytoplasmic. A helical transmembrane segment spans residues 14–34 (YAAHALAVAAAAMVLVWAIYF). In terms of domain architecture, Cytochrome b561 spans 15-219 (AAHALAVAAA…FGASVVVAAI (205 aa)). The Extracellular segment spans residues 35–50 (RGGLAIEATNKNLIFN). Residues 51–71 (VHPVLMLIGYIIIGGEAIMVY) traverse the membrane as a helical segment. His52 is a binding site for heme b. 67–75 (AIMVYRVLP) provides a ligand contact to L-ascorbate. The Cytoplasmic portion of the chain corresponds to 72–84 (RVLPTSNHETNKL). The chain crosses the membrane as a helical span at residues 85 to 105 (IHLVLHGIALVLGAVGIYFAF). Heme b-binding residues include His86 and His120. The Extracellular segment spans residues 106 to 122 (KNHNESGIANLYSLHSW). Monodehydro-L-ascorbate radical is bound at residue 116 to 125 (LYSLHSWIGI). The chain crosses the membrane as a helical span at residues 123 to 143 (IGIGTITLYGIQWIVGFVTFF). The Cytoplasmic portion of the chain corresponds to 144 to 153 (FPGAAPNVKK). Residues 154 to 174 (GVLPWHILFGLFVYILALANA) traverse the membrane as a helical segment. His159 contacts heme b. The Extracellular segment spans residues 175-201 (ELGFLEKLTFLESSGLDKYGTEAFLVN). Residues 202–222 (FTALVVVLFGASVVVAAIAPV) form a helical membrane-spanning segment. Topologically, residues 223–236 (RLEEPQGYVPIPEN) are cytoplasmic.

It depends on heme b as a cofactor.

The protein localises to the membrane. In terms of biological role, two-heme-containing cytochrome. Catalyzes ascorbate-dependent trans-membrane electron transfer by utilizing a concerted H(+)/e(-) transfer mechanism. This is Ascorbate-specific transmembrane electron transporter 2 from Zea mays (Maize).